Here is an 807-residue protein sequence, read N- to C-terminus: Glycerol-3-phosphate acyltransferase (807 aa).

The HXXXXD motif motif lies at 308-313 (CHRSHM).

It belongs to the GPAT/DAPAT family.

The protein resides in the cell inner membrane. It carries out the reaction sn-glycerol 3-phosphate + an acyl-CoA = a 1-acyl-sn-glycero-3-phosphate + CoA. The protein operates within phospholipid metabolism; CDP-diacylglycerol biosynthesis; CDP-diacylglycerol from sn-glycerol 3-phosphate: step 1/3. The chain is Glycerol-3-phosphate acyltransferase from Shewanella denitrificans (strain OS217 / ATCC BAA-1090 / DSM 15013).